A 456-amino-acid chain; its full sequence is N(6)-adenosine-methyltransferase non-catalytic subunit METTL14 (456 aa).

The disordered stretch occupies residues 50 to 75 (TCRASYDTSAPNAKRKYLDEGETDED). Interaction with METTL3 regions lie at residues 135 to 136 (RD) and 237 to 238 (SG). The interval 245 to 254 (RVCLRKWGYR) is positively charged region required for RNA-binding. Interaction with METTL3 stretches follow at residues 255 to 258 (RCED) and 278 to 287 (KAVFQRTKEH). Positions 297–298 (KR) are positively charged region required for RNA-binding. The interval 308–312 (NVDID) is interaction with METTL3. Positions 393–456 (ERLRPKSPPP…GAHRGGFPPR (64 aa)) are disordered. Residue Ser399 is modified to Phosphoserine. Over residues 409-423 (GGGAPRGGGRGGTSA) the composition is skewed to gly residues. A compositionally biased stretch (basic and acidic residues) spans 425-440 (RGRERNRSNFRGERGG). Residues 441–450 (FRGGRGGAHR) show a composition bias toward gly residues.

The protein belongs to the MT-A70-like family. Heterodimer; heterodimerizes with METTL3 to form an antiparallel heterodimer that constitutes an active methyltransferase. Component of the WMM complex, a N6-methyltransferase complex composed of a catalytic subcomplex, named MAC, and of an associated subcomplex, named MACOM. The MAC subcomplex is composed of METTL3 and METTL14. The MACOM subcomplex is composed of WTAP, ZC3H13, CBLL1/HAKAI, VIRMA, and, in some cases of RBM15 (RBM15 or RBM15B).

Its subcellular location is the nucleus. Functionally, the METTL3-METTL14 heterodimer forms a N6-methyltransferase complex that methylates adenosine residues at the N(6) position of some mRNAs and regulates the circadian clock, differentiation of embryonic stem cells and cortical neurogenesis. In the heterodimer formed with METTL3, METTL14 constitutes the RNA-binding scaffold that recognizes the substrate rather than the catalytic core. N6-methyladenosine (m6A), which takes place at the 5'-[AG]GAC-3' consensus sites of some mRNAs, plays a role in mRNA stability and processing. M6A acts as a key regulator of mRNA stability by promoting mRNA destabilization and degradation. In embryonic stem cells (ESCs), m6A methylation of mRNAs encoding key naive pluripotency-promoting transcripts results in transcript destabilization. M6A regulates spermatogonial differentiation and meiosis and is essential for male fertility and spermatogenesis. M6A also regulates cortical neurogenesis: m6A methylation of transcripts related to transcription factors, neural stem cells, the cell cycle and neuronal differentiation during brain development promotes their destabilization and decay, promoting differentiation of radial glial cells. In Homo sapiens (Human), this protein is N(6)-adenosine-methyltransferase non-catalytic subunit METTL14.